A 377-amino-acid polypeptide reads, in one-letter code: Chaperone protein DnaJ (377 aa).

Positions D5 to G70 constitute a J domain. The CR-type zinc finger occupies G137 to Q215. The Zn(2+) site is built by C150, C153, C167, C170, C189, C192, C203, and C206. CXXCXGXG motif repeat units follow at residues C150–G157, C167–G174, C189–G196, and C203–G210.

It belongs to the DnaJ family. In terms of assembly, homodimer. Zn(2+) serves as cofactor.

It is found in the cytoplasm. Participates actively in the response to hyperosmotic and heat shock by preventing the aggregation of stress-denatured proteins and by disaggregating proteins, also in an autonomous, DnaK-independent fashion. Unfolded proteins bind initially to DnaJ; upon interaction with the DnaJ-bound protein, DnaK hydrolyzes its bound ATP, resulting in the formation of a stable complex. GrpE releases ADP from DnaK; ATP binding to DnaK triggers the release of the substrate protein, thus completing the reaction cycle. Several rounds of ATP-dependent interactions between DnaJ, DnaK and GrpE are required for fully efficient folding. Also involved, together with DnaK and GrpE, in the DNA replication of plasmids through activation of initiation proteins. In Cupriavidus taiwanensis (strain DSM 17343 / BCRC 17206 / CCUG 44338 / CIP 107171 / LMG 19424 / R1) (Ralstonia taiwanensis (strain LMG 19424)), this protein is Chaperone protein DnaJ.